A 251-amino-acid polypeptide reads, in one-letter code: Ubiquinone/menaquinone biosynthesis C-methyltransferase UbiE (251 aa).

S-adenosyl-L-methionine-binding positions include Thr-74, Asp-95, and 123 to 124 (NA).

The protein belongs to the class I-like SAM-binding methyltransferase superfamily. MenG/UbiE family.

The enzyme catalyses a 2-demethylmenaquinol + S-adenosyl-L-methionine = a menaquinol + S-adenosyl-L-homocysteine + H(+). It catalyses the reaction a 2-methoxy-6-(all-trans-polyprenyl)benzene-1,4-diol + S-adenosyl-L-methionine = a 5-methoxy-2-methyl-3-(all-trans-polyprenyl)benzene-1,4-diol + S-adenosyl-L-homocysteine + H(+). It functions in the pathway quinol/quinone metabolism; menaquinone biosynthesis; menaquinol from 1,4-dihydroxy-2-naphthoate: step 2/2. The protein operates within cofactor biosynthesis; ubiquinone biosynthesis. In terms of biological role, methyltransferase required for the conversion of demethylmenaquinol (DMKH2) to menaquinol (MKH2) and the conversion of 2-polyprenyl-6-methoxy-1,4-benzoquinol (DDMQH2) to 2-polyprenyl-3-methyl-6-methoxy-1,4-benzoquinol (DMQH2). This Shewanella oneidensis (strain ATCC 700550 / JCM 31522 / CIP 106686 / LMG 19005 / NCIMB 14063 / MR-1) protein is Ubiquinone/menaquinone biosynthesis C-methyltransferase UbiE.